We begin with the raw amino-acid sequence, 25 residues long: Kunitz-type serine protease inhibitor 4 (25 aa).

Residues 7–25 (TCYLPKETGPCVGYFFRYY) enclose the BPTI/Kunitz inhibitor domain.

It is found in the secreted. Its function is as follows. Inhibits trypsin, human plasma kallikrein and human neutrophil elastase. This is Kunitz-type serine protease inhibitor 4 from Rhipicephalus microplus (Cattle tick).